An 842-amino-acid chain; its full sequence is Protein translocase subunit SecA 1 (842 aa).

Residues Gln85, 103 to 107 (GEGKT), and Asp493 contribute to the ATP site. Positions 824, 826, 835, and 836 each coordinate Zn(2+).

Belongs to the SecA family. Monomer and homodimer. Part of the essential Sec protein translocation apparatus which comprises SecA, SecYEG and auxiliary proteins SecDF. Other proteins may also be involved. Zn(2+) is required as a cofactor.

Its subcellular location is the cell membrane. It localises to the cytoplasm. It carries out the reaction ATP + H2O + cellular proteinSide 1 = ADP + phosphate + cellular proteinSide 2.. In terms of biological role, part of the Sec protein translocase complex. Interacts with the SecYEG preprotein conducting channel. Has a central role in coupling the hydrolysis of ATP to the transfer of proteins into and across the cell membrane, serving as an ATP-driven molecular motor driving the stepwise translocation of polypeptide chains across the membrane. This chain is Protein translocase subunit SecA 1, found in Streptococcus agalactiae serotype Ia (strain ATCC 27591 / A909 / CDC SS700).